A 180-amino-acid polypeptide reads, in one-letter code: MIISETNRREISKYLFKEGVLFAKKDFNLPQHPLIESVPNLQVIKLMQSFKSKEYVRETFAWMHYYWFLTNEGIDFLRTYLNLPSEIVPATLKKQQKPLGRPFGGGGDRPRGPPRGDGERRFGDRDGYRGGPKSGGEYGDKAGAPADYQPGFRGGAGGARQGFGRGAGGFGGGAAGSDLP.

The interval 92-180 is disordered; the sequence is LKKQQKPLGR…GGGAAGSDLP (89 aa). A compositionally biased stretch (basic and acidic residues) spans 108-128; it reads DRPRGPPRGDGERRFGDRDGY. Positions 152-180 are enriched in gly residues; the sequence is FRGGAGGARQGFGRGAGGFGGGAAGSDLP.

Belongs to the eukaryotic ribosomal protein eS10 family.

It localises to the cytoplasm. The chain is Small ribosomal subunit protein eS10y (RPS10B) from Arabidopsis thaliana (Mouse-ear cress).